A 446-amino-acid chain; its full sequence is C4-dicarboxylate transport protein 2 (446 aa).

Transmembrane regions (helical) follow at residues 7–26, 46–64, 77–99, 152–171, 192–211, 221–243, 291–313, 318–340, 353–375, and 381–403; these read PLFG…GIWA, MLIA…CGAG, VIYF…YAFG, ILQV…LLGE, AVVI…FTVG, LGFL…LGGI, VVGL…YLTL, IAQA…VALI, IVIL…VLVL, and IGIA…IAAW.

Belongs to the dicarboxylate/amino acid:cation symporter (DAACS) (TC 2.A.23) family.

The protein localises to the cell inner membrane. Responsible for the transport of dicarboxylates such as succinate, fumarate, and malate from the periplasm across the membrane. This chain is C4-dicarboxylate transport protein 2 (dctA2), found in Ralstonia nicotianae (strain ATCC BAA-1114 / GMI1000) (Ralstonia solanacearum).